The chain runs to 201 residues: Holliday junction branch migration complex subunit RuvA (201 aa).

The tract at residues 1-64 is domain I; that stretch reads MIGRLHGKII…EDAHLLFGFA (64 aa). A domain II region spans residues 65-143; it reads QKQDRTLFRE…GVAQSDFFEE (79 aa). The interval 144 to 154 is flexible linker; sequence HSVETIVATHS. A domain III region spans residues 154–201; it reads SHDPADEARDALVALGYKLADAEKMIKKVNKAGATSEQLIREALKASL.

This sequence belongs to the RuvA family. As to quaternary structure, homotetramer. Forms an RuvA(8)-RuvB(12)-Holliday junction (HJ) complex. HJ DNA is sandwiched between 2 RuvA tetramers; dsDNA enters through RuvA and exits via RuvB. An RuvB hexamer assembles on each DNA strand where it exits the tetramer. Each RuvB hexamer is contacted by two RuvA subunits (via domain III) on 2 adjacent RuvB subunits; this complex drives branch migration. In the full resolvosome a probable DNA-RuvA(4)-RuvB(12)-RuvC(2) complex forms which resolves the HJ.

It localises to the cytoplasm. Functionally, the RuvA-RuvB-RuvC complex processes Holliday junction (HJ) DNA during genetic recombination and DNA repair, while the RuvA-RuvB complex plays an important role in the rescue of blocked DNA replication forks via replication fork reversal (RFR). RuvA specifically binds to HJ cruciform DNA, conferring on it an open structure. The RuvB hexamer acts as an ATP-dependent pump, pulling dsDNA into and through the RuvAB complex. HJ branch migration allows RuvC to scan DNA until it finds its consensus sequence, where it cleaves and resolves the cruciform DNA. In Actinobacillus pleuropneumoniae serotype 7 (strain AP76), this protein is Holliday junction branch migration complex subunit RuvA.